The sequence spans 298 residues: Protein RKD2 (298 aa).

Basic and acidic residues-rich tracts occupy residues 1–10 and 81–102; these read MADHTTKEQK and EQNRGDGASSEKKRENGTVKET. 2 disordered regions span residues 1–22 and 73–112; these read MADHTTKEQKSFSFLAHSPSFD and SSASWNETEQNRGDGASSEKKRENGTVKETTKKRKINERH. The region spanning 121–203 is the RWP-RK domain; that stretch reads SDITTYTTSS…KMEGEENAEK (83 aa). A coiled-coil region spans residues 188-222; the sequence is NVKELQKMEGEENAEKLQDALEMLEKEKRTIEDLP. Residues 241–279 form a disordered region; sequence NHKRKKKRSLKSDQSQVPSCSSSGSVPSDESVDEAGMES. A compositionally biased stretch (low complexity) spans 252–269; sequence SDQSQVPSCSSSGSVPSD. Acidic residues predominate over residues 270 to 279; that stretch reads ESVDEAGMES.

Its subcellular location is the nucleus. Functionally, putative transcription factor. The protein is Protein RKD2 (RKD2) of Arabidopsis thaliana (Mouse-ear cress).